The sequence spans 630 residues: uncharacterized protein (630 aa).

2 consecutive transmembrane segments (helical) span residues 8-28 (LFNM…ASAV) and 258-278 (VDNS…PLVI). The disordered stretch occupies residues 399-426 (EETSKPTEQPSPADSTSTPAAPEKGAAS). The segment covering 404 to 417 (PTEQPSPADSTSTP) has biased composition (polar residues).

This sequence belongs to the peptidase S1C family.

Its subcellular location is the cell membrane. This is an uncharacterized protein from Sinorhizobium fredii (strain NBRC 101917 / NGR234).